Here is a 209-residue protein sequence, read N- to C-terminus: Small ribosomal subunit protein uS4 (209 aa).

The tract at residues 23–46 is disordered; it reads SRNPLLKKPHPPGQHGMQRKKKSD. Residues 93 to 156 form the S4 RNA-binding domain; that stretch reads CRLDNMVYRM…RKLQSVQESL (64 aa).

Belongs to the universal ribosomal protein uS4 family. As to quaternary structure, part of the 30S ribosomal subunit. Contacts protein S5. The interaction surface between S4 and S5 is involved in control of translational fidelity.

In terms of biological role, one of the primary rRNA binding proteins, it binds directly to 16S rRNA where it nucleates assembly of the body of the 30S subunit. Its function is as follows. With S5 and S12 plays an important role in translational accuracy. The protein is Small ribosomal subunit protein uS4 of Chlamydia felis (strain Fe/C-56) (Chlamydophila felis).